A 99-amino-acid chain; its full sequence is MWGSMPRRKIDKLYVKIYFEGNAIEGEYDFDAVTHLKNGILKYLWTGKKDPIIIWNMDNKSFTIIDPSKICAVEVQGSLMFLDDIPEKKLEMKSFSERD.

This is an uncharacterized protein from Methanocaldococcus jannaschii (strain ATCC 43067 / DSM 2661 / JAL-1 / JCM 10045 / NBRC 100440) (Methanococcus jannaschii).